Consider the following 325-residue polypeptide: ATP phosphoribosyltransferase (325 aa).

It belongs to the ATP phosphoribosyltransferase family. Long subfamily. Mg(2+) serves as cofactor.

The protein localises to the cytoplasm. The catalysed reaction is 1-(5-phospho-beta-D-ribosyl)-ATP + diphosphate = 5-phospho-alpha-D-ribose 1-diphosphate + ATP. It functions in the pathway amino-acid biosynthesis; L-histidine biosynthesis; L-histidine from 5-phospho-alpha-D-ribose 1-diphosphate: step 1/9. With respect to regulation, feedback inhibited by histidine. Functionally, catalyzes the condensation of ATP and 5-phosphoribose 1-diphosphate to form N'-(5'-phosphoribosyl)-ATP (PR-ATP). Has a crucial role in the pathway because the rate of histidine biosynthesis seems to be controlled primarily by regulation of HisG enzymatic activity. The polypeptide is ATP phosphoribosyltransferase (Bradyrhizobium sp. (strain ORS 278)).